The sequence spans 218 residues: Pyridoxine/pyridoxamine 5'-phosphate oxidase (218 aa).

Residues 14–17 and Lys72 each bind substrate; that span reads RREY. FMN contacts are provided by residues 67–72, 82–83, Arg88, Lys89, and Gln111; these read RIVLLK and YT. Substrate is bound by residues Tyr129, Arg133, and Ser137. Residues 146 to 147 and Trp191 contribute to the FMN site; that span reads QS. 197–199 contributes to the substrate binding site; that stretch reads RLH. Arg201 is an FMN binding site.

This sequence belongs to the pyridoxamine 5'-phosphate oxidase family. In terms of assembly, homodimer. It depends on FMN as a cofactor.

It catalyses the reaction pyridoxamine 5'-phosphate + O2 + H2O = pyridoxal 5'-phosphate + H2O2 + NH4(+). The enzyme catalyses pyridoxine 5'-phosphate + O2 = pyridoxal 5'-phosphate + H2O2. The protein operates within cofactor metabolism; pyridoxal 5'-phosphate salvage; pyridoxal 5'-phosphate from pyridoxamine 5'-phosphate: step 1/1. It participates in cofactor metabolism; pyridoxal 5'-phosphate salvage; pyridoxal 5'-phosphate from pyridoxine 5'-phosphate: step 1/1. Its function is as follows. Catalyzes the oxidation of either pyridoxine 5'-phosphate (PNP) or pyridoxamine 5'-phosphate (PMP) into pyridoxal 5'-phosphate (PLP). This Citrobacter koseri (strain ATCC BAA-895 / CDC 4225-83 / SGSC4696) protein is Pyridoxine/pyridoxamine 5'-phosphate oxidase.